We begin with the raw amino-acid sequence, 436 residues long: F-box/LRR-repeat protein 20 (436 aa).

The F-box domain maps to Ala22–Ile68. 13 LRR repeats span residues Gln74 to Gly100, Cys101 to Gly126, Cys127 to Ser152, Cys153 to Trp178, Cys179 to Gly204, Cys205 to Thr230, Cys231 to Gly256, Cys257 to Arg282, Cys283 to Glu308, Cys309 to His334, Cys335 to Asn363, Cys364 to Asp388, and Cys389 to Ala414. Residue Thr417 is modified to Phosphothreonine. The residue at position 421 (Ser421) is a Phosphoserine.

In terms of assembly, interacts with SKP1 and CUL1. As to expression, highly expressed in brain.

The protein resides in the cytoplasm. In terms of biological role, substrate-recognition component of the SCF (SKP1-CUL1-F-box protein)-type E3 ubiquitin ligase complex. Isoform 3 regulates neural transmission by binding and ubiquitinating RIMS1, a modulator of presynaptic plasticity. The polypeptide is F-box/LRR-repeat protein 20 (Fbxl20) (Mus musculus (Mouse)).